Reading from the N-terminus, the 110-residue chain is Large ribosomal subunit protein uL22 (110 aa).

It belongs to the universal ribosomal protein uL22 family. Part of the 50S ribosomal subunit.

Its function is as follows. This protein binds specifically to 23S rRNA; its binding is stimulated by other ribosomal proteins, e.g. L4, L17, and L20. It is important during the early stages of 50S assembly. It makes multiple contacts with different domains of the 23S rRNA in the assembled 50S subunit and ribosome. In terms of biological role, the globular domain of the protein is located near the polypeptide exit tunnel on the outside of the subunit, while an extended beta-hairpin is found that lines the wall of the exit tunnel in the center of the 70S ribosome. The protein is Large ribosomal subunit protein uL22 of Geobacter metallireducens (strain ATCC 53774 / DSM 7210 / GS-15).